The primary structure comprises 126 residues: uncharacterized protein (126 aa).

Disordered stretches follow at residues 15–72 and 93–126; these read PEWG…SDPQ and TQIP…TTSN. Composition is skewed to basic and acidic residues over residues 29 to 46 and 55 to 64; these read DPLD…RVPE and VQEDSREHGQ.

This is an uncharacterized protein from Homo sapiens (Human).